A 78-amino-acid chain; its full sequence is Large ribosomal subunit protein bL28 (78 aa).

Belongs to the bacterial ribosomal protein bL28 family.

The protein is Large ribosomal subunit protein bL28 of Synechococcus sp. (strain ATCC 27144 / PCC 6301 / SAUG 1402/1) (Anacystis nidulans).